The following is a 161-amino-acid chain: Mediator of RNA polymerase II transcription subunit 10 (161 aa).

This sequence belongs to the Mediator complex subunit 10 family. Component of the Mediator complex.

Its subcellular location is the nucleus. Its function is as follows. Component of the Mediator complex, a coactivator involved in the regulated transcription of nearly all RNA polymerase II-dependent genes. Mediator functions as a bridge to convey information from gene-specific regulatory proteins to the basal RNA polymerase II transcription machinery. Mediator is recruited to promoters by direct interactions with regulatory proteins and serves as a scaffold for the assembly of a functional preinitiation complex with RNA polymerase II and the general transcription factors. The chain is Mediator of RNA polymerase II transcription subunit 10 (NUT2) from Kluyveromyces lactis (strain ATCC 8585 / CBS 2359 / DSM 70799 / NBRC 1267 / NRRL Y-1140 / WM37) (Yeast).